The sequence spans 264 residues: Thymidylate synthase (264 aa).

Arginine 21 is a dUMP binding site. Histidine 51 is a (6R)-5,10-methylene-5,6,7,8-tetrahydrofolate binding site. 126–127 (RR) lines the dUMP pocket. The active-site Nucleophile is the cysteine 146. Residues 166–169 (RSGD), asparagine 177, and 207–209 (HLY) contribute to the dUMP site. Aspartate 169 is a binding site for (6R)-5,10-methylene-5,6,7,8-tetrahydrofolate. Alanine 263 provides a ligand contact to (6R)-5,10-methylene-5,6,7,8-tetrahydrofolate.

The protein belongs to the thymidylate synthase family. Bacterial-type ThyA subfamily. As to quaternary structure, homodimer.

The protein localises to the cytoplasm. It carries out the reaction dUMP + (6R)-5,10-methylene-5,6,7,8-tetrahydrofolate = 7,8-dihydrofolate + dTMP. The protein operates within pyrimidine metabolism; dTTP biosynthesis. Functionally, catalyzes the reductive methylation of 2'-deoxyuridine-5'-monophosphate (dUMP) to 2'-deoxythymidine-5'-monophosphate (dTMP) while utilizing 5,10-methylenetetrahydrofolate (mTHF) as the methyl donor and reductant in the reaction, yielding dihydrofolate (DHF) as a by-product. This enzymatic reaction provides an intracellular de novo source of dTMP, an essential precursor for DNA biosynthesis. The protein is Thymidylate synthase of Brevibacillus brevis (strain 47 / JCM 6285 / NBRC 100599).